Here is a 207-residue protein sequence, read N- to C-terminus: MPKVIGLTGGIASGKSTVSELLSVFGFKVVDADKAAREAVKKGSKGLAQVREVFGDEAIDENGEMNRRYMGDLVFNHPEKRLELNAIIHPIVRDIMEEEKQEYLKQGYNVIMDIPLLFENELENTVDEVWVVYTSESIQMDRLMQRNNLSLEDAKARVYSQISIDKKSRMADHVIDNLGDKLELKQNLERLLEEEGYIEKPNYGEGD.

The DPCK domain occupies 4–203 (VIGLTGGIAS…EEGYIEKPNY (200 aa)). An ATP-binding site is contributed by 12–17 (ASGKST).

It belongs to the CoaE family.

The protein resides in the cytoplasm. It carries out the reaction 3'-dephospho-CoA + ATP = ADP + CoA + H(+). Its pathway is cofactor biosynthesis; coenzyme A biosynthesis; CoA from (R)-pantothenate: step 5/5. Its function is as follows. Catalyzes the phosphorylation of the 3'-hydroxyl group of dephosphocoenzyme A to form coenzyme A. The polypeptide is Dephospho-CoA kinase (Staphylococcus aureus (strain MRSA252)).